Consider the following 132-residue polypeptide: Large ribosomal subunit protein uL14 (132 aa).

This sequence belongs to the universal ribosomal protein uL14 family. In terms of assembly, part of the 50S ribosomal subunit. Forms a cluster with proteins L3 and L24e, part of which may contact the 16S rRNA in 2 intersubunit bridges.

Binds to 23S rRNA. Forms part of two intersubunit bridges in the 70S ribosome. The sequence is that of Large ribosomal subunit protein uL14 from Methanocorpusculum labreanum (strain ATCC 43576 / DSM 4855 / Z).